We begin with the raw amino-acid sequence, 387 residues long: Lactosylceramide alpha-2,3-sialyltransferase (387 aa).

Over 1 to 33 (MPNEFTSAKLRSDCSRTSLQWYTQTQHKMRRPS) the chain is Cytoplasmic. The helical; Signal-anchor for type II membrane protein transmembrane segment at 34–54 (LLLKDILKCMLVVFGVWLLYI) threads the bilayer. Residues 55–387 (LKLNYTAEEC…VVQDLSGGIH (333 aa)) lie on the Extracellular side of the membrane. N-linked (GlcNAc...) asparagine glycosylation is found at Asn-58 and Asn-208. A disulfide bond links Cys-167 and Cys-325.

Belongs to the glycosyltransferase 29 family.

Its subcellular location is the golgi apparatus membrane. It catalyses the reaction a beta-D-Gal-(1-&gt;4)-beta-D-Glc-(1&lt;-&gt;1)-Cer(d18:1(4E)) + CMP-N-acetyl-beta-neuraminate = a ganglioside GM3 (d18:1(4E)) + CMP + H(+). The catalysed reaction is ganglioside GA2 (d18:1(4E)/18:0) + CMP-N-acetyl-beta-neuraminate = ganglioside GM2 (d18:1(4E)/18:0) + CMP + H(+). The enzyme catalyses a beta-D-Gal-(1&lt;-&gt;1')-ceramide + CMP-N-acetyl-beta-neuraminate = N-acetyl-alpha-neuraminosyl-(2-&gt;3)-beta-D-galactosyl-(1&lt;-&gt;1')-ceramide + CMP + H(+). It carries out the reaction ganglioside GA1 (d18:1(4E)/18:0) + CMP-N-acetyl-beta-neuraminate = ganglioside GM1 (d18:1(4E)/18:0) + CMP + H(+). Its function is as follows. Transfers the sialyl group (N-acetyl-alpha-neuraminyl or NeuAc) from CMP-NeuAc to the non-reducing terminal galactose (Gal) of glycosphingolipids forming gangliosides (important molecules involved in the regulation of multiple cellular processes, including cell proliferation and differentiation, apoptosis, embryogenesis, development, and oncogenesis). Mainly involved in the biosynthesis of ganglioside GM3 but can also use different glycolipids as substrate acceptors such as D-galactosylceramide (GalCer), asialo-GM2 (GA2) and asialo-GM1 (GA1), although less preferentially than beta-D-Gal-(1-&gt;4)-beta-D-Glc-(1&lt;-&gt;1)-Cer (LacCer). The chain is Lactosylceramide alpha-2,3-sialyltransferase (St3gal5) from Rattus norvegicus (Rat).